Here is a 603-residue protein sequence, read N- to C-terminus: NADH-ubiquinone oxidoreductase chain 5 (603 aa).

Transmembrane regions (helical) follow at residues 4–24, 36–56, 87–107, 114–134, 137–157, 171–191, 200–220, 241–261, 272–292, 301–320, 325–347, 366–386, 407–429, 457–477, 482–502, and 583–603; these read YTTMAILTLTSLIPPITATLI, VKMTIASTFMISLFPTMMFMC, MMFIPIALFVTWSIMEFSLWY, INQFFKYLLIFLTTMLILVTA, LFQLFIGWEGVGIMSFLLIGW, AILYNRIGDIGFILALAWFLL, QMILLNSNPNFLPLAGLLLAA, TPVSALLHSSTMVVAGVFLLI, LIQTLTLCLGAITTLFTAICA, IVAFSTSSQLGLMVVTIGIN, AFLHICTHAFFKAMLFMCSGSII, LPLTSTSLTIGSLALTGMPFL, WALSTTLIATSLTSAYSTRMILL, LTIGSLLAGFLIINSIPPTSP, IPLYLKLTALSITLLGFLTAF, and MIKLYSLSLLIPLSLTLLLIM.

It belongs to the complex I subunit 5 family. As to quaternary structure, core subunit of respiratory chain NADH dehydrogenase (Complex I) which is composed of 45 different subunits.

The protein resides in the mitochondrion inner membrane. It catalyses the reaction a ubiquinone + NADH + 5 H(+)(in) = a ubiquinol + NAD(+) + 4 H(+)(out). Functionally, core subunit of the mitochondrial membrane respiratory chain NADH dehydrogenase (Complex I) which catalyzes electron transfer from NADH through the respiratory chain, using ubiquinone as an electron acceptor. Essential for the catalytic activity and assembly of complex I. The polypeptide is NADH-ubiquinone oxidoreductase chain 5 (MT-ND5) (Hylobates lar (Lar gibbon)).